A 491-amino-acid polypeptide reads, in one-letter code: MGLCHSKIDKTTRKETGATSTATTTVERQSSGRLRRPRDLYSGGEISEIQQVVGRLVGNGSSEIACLYTQQGKKGTNQDAMLVWENFCSRSDTVLCGVFDGHGPFGHMVSKRVRDMLPFTLSTQLKTTSGTEQSSSKNGLNSAPTCVDEEQWCELQLCEKDEKLFPEMYLPLKRALLKTCQQMDKELKMHPTINCFCSGTTSVTVIKQGKDLVVGNIGDSRAVLATRDQDNALVAVQLTIDLKPDLPSESARIHRCKGRVFALQDEPEVARVWLPNSDSPGLAMARAFGDFCLKDYGLISVPDINYHRLTERDQYIILATDGVWDVLSNKEAVDIVASAPSRDTAARAVVDTAVRAWRLKYPTSKNDDCAVVCLFLEDTSAGGTVEVSETVNHSHEESTESVTITSSKDADKKEEASTETNETVPVWEIKEEKTPESCRIESKKTTLAECISVKDDEEWSALEGLTRVNSLLSIPRFFSGELRSSSWRKWL.

Basic and acidic residues predominate over residues 1-16 (MGLCHSKIDKTTRKET). Positions 1-39 (MGLCHSKIDKTTRKETGATSTATTTVERQSSGRLRRPRD) are disordered. Over residues 17-28 (GATSTATTTVER) the composition is skewed to low complexity. Positions 64-376 (IACLYTQQGK…DDCAVVCLFL (313 aa)) constitute a PPM-type phosphatase domain. Positions 100, 101, 321, and 367 each coordinate Mn(2+). The segment at 391–422 (VNHSHEESTESVTITSSKDADKKEEASTETNE) is disordered.

Belongs to the PP2C family. Requires Mg(2+) as cofactor. The cofactor is Mn(2+).

The enzyme catalyses O-phospho-L-seryl-[protein] + H2O = L-seryl-[protein] + phosphate. The catalysed reaction is O-phospho-L-threonyl-[protein] + H2O = L-threonyl-[protein] + phosphate. This Arabidopsis thaliana (Mouse-ear cress) protein is Probable protein phosphatase 2C 6.